A 485-amino-acid chain; its full sequence is Choline/ethanolamine transporter flvcr2b (485 aa).

The Cytoplasmic portion of the chain corresponds to methionine 1–proline 46. Residues glutamate 47–glutamine 71 form a helical membrane-spanning segment. Choline is bound by residues asparagine 68 and tryptophan 72. Topologically, residues tryptophan 72–aspartate 89 are extracellular. A helical transmembrane segment spans residues serine 90–lysine 117. Over lysine 118 to glycine 119 the chain is Cytoplasmic. The chain crosses the membrane as a helical span at residues leucine 120–valine 139. Residues alanine 140–leucine 146 lie on the Extracellular side of the membrane. Residues phenylalanine 147–tryptophan 175 traverse the membrane as a helical segment. Choline-binding residues include glutamine 161 and leucine 165. Residues phenylalanine 176–glutamate 180 lie on the Cytoplasmic side of the membrane. A helical transmembrane segment spans residues valine 181 to leucine 206. At valine 207 to aspartate 211 the chain is on the extracellular side. A helical transmembrane segment spans residues aspartate 212–valine 241. Residues phenylalanine 242 to asparagine 277 are Cytoplasmic-facing. Residues lysine 278–histidine 308 form a helical membrane-spanning segment. Tyrosine 295 provides a ligand contact to choline. Residues tyrosine 309–glutamate 312 lie on the Extracellular side of the membrane. A helical transmembrane segment spans residues glutamate 313–serine 341. Residues lysine 342–threonine 343 are Cytoplasmic-facing. Residues tyrosine 344–leucine 366 form a helical membrane-spanning segment. Over aspartate 367–histidine 369 the chain is Extracellular. A helical membrane pass occupies residues histidine 370–leucine 399. Residues threonine 400–threonine 407 lie on the Cytoplasmic side of the membrane. A helical membrane pass occupies residues serine 408 to serine 433. Position 417 (glutamine 417) interacts with choline. The Extracellular portion of the chain corresponds to phenylalanine 434–glycine 435. A helical membrane pass occupies residues threonine 436–lysine 458. Residues serine 459–phenylalanine 485 are Cytoplasmic-facing.

It belongs to the major facilitator superfamily. Feline leukemia virus subgroup C receptor (TC 2.A.1.28.1) family.

The protein localises to the cell membrane. It localises to the mitochondrion membrane. It is found in the endoplasmic reticulum membrane. It catalyses the reaction choline(out) = choline(in). The catalysed reaction is ethanolamine(in) = ethanolamine(out). It carries out the reaction heme b(in) = heme b(out). In terms of biological role, choline uniporter that specifically mediates choline uptake at the blood-brain-barrier. Responsible for the majority of choline uptake across the blood-brain-barrier from the circulation into the brain. Choline, a nutrient critical for brain development, is a precursor of phosphatidylcholine, as well as betaine. Also mediates transport of ethanolamine. Choline and ethanolamine transport is not coupled with proton transport and is exclusively driven by the choline gradient across the plasma membrane. Also acts as a heme b transporter. The chain is Choline/ethanolamine transporter flvcr2b from Danio rerio (Zebrafish).